A 440-amino-acid polypeptide reads, in one-letter code: Glutamyl-tRNA reductase (440 aa).

Residues 50–53 (TCNR), Ser-109, 114–116 (EPQ), and Gln-120 contribute to the substrate site. Cys-51 functions as the Nucleophile in the catalytic mechanism. 189–194 (GAGEMA) is a binding site for NADP(+).

Belongs to the glutamyl-tRNA reductase family. Homodimer.

It catalyses the reaction (S)-4-amino-5-oxopentanoate + tRNA(Glu) + NADP(+) = L-glutamyl-tRNA(Glu) + NADPH + H(+). It participates in porphyrin-containing compound metabolism; protoporphyrin-IX biosynthesis; 5-aminolevulinate from L-glutamyl-tRNA(Glu): step 1/2. In terms of biological role, catalyzes the NADPH-dependent reduction of glutamyl-tRNA(Glu) to glutamate 1-semialdehyde (GSA). This Nitratidesulfovibrio vulgaris (strain ATCC 29579 / DSM 644 / CCUG 34227 / NCIMB 8303 / VKM B-1760 / Hildenborough) (Desulfovibrio vulgaris) protein is Glutamyl-tRNA reductase.